Here is a 445-residue protein sequence, read N- to C-terminus: UDP-N-acetylmuramoylalanine--D-glutamate ligase (445 aa).

117–123 (GSNGKTT) is a binding site for ATP.

The protein belongs to the MurCDEF family.

The protein localises to the cytoplasm. The enzyme catalyses UDP-N-acetyl-alpha-D-muramoyl-L-alanine + D-glutamate + ATP = UDP-N-acetyl-alpha-D-muramoyl-L-alanyl-D-glutamate + ADP + phosphate + H(+). It participates in cell wall biogenesis; peptidoglycan biosynthesis. Cell wall formation. Catalyzes the addition of glutamate to the nucleotide precursor UDP-N-acetylmuramoyl-L-alanine (UMA). This Neisseria meningitidis serogroup B (strain ATCC BAA-335 / MC58) protein is UDP-N-acetylmuramoylalanine--D-glutamate ligase.